Consider the following 68-residue polypeptide: Large ribosomal subunit protein uL29 (68 aa).

Belongs to the universal ribosomal protein uL29 family.

The sequence is that of Large ribosomal subunit protein uL29 from Streptococcus thermophilus (strain ATCC BAA-250 / LMG 18311).